Consider the following 630-residue polypeptide: Protein zwilch homolog (630 aa).

It belongs to the ZWILCH family. As to quaternary structure, component of the RZZ complex composed of rod-1, czw-1 and zwl-1. Interacts with the spindly-like protein spdl-1. Interacts with NDC80 complex component ndc-80.

Its subcellular location is the cytoplasm. The protein localises to the cell cortex. It localises to the chromosome. It is found in the centromere. The protein resides in the kinetochore. Its subcellular location is the cytoskeleton. The protein localises to the spindle. Essential component of the mitotic checkpoint, which prevents cells from prematurely exiting mitosis. Required for chromosome segregation, the assembly of the dynein-dynactin and mdf-1-mdf-2 complexes onto kinetochores and spindle pole separation. Its function related to the spindle assembly machinery and kinetochore-microtubule attachments likely depends on its association in the mitotic RZZ complex. The RZZ complex recruits the spindly-like protein spdl-1 to kinetochores. To prevent irregular chromosome segregation, the complex also inhibits the attachment of the kinetochore-associated NDC80 complex to microtubules. The recruitment of spdl-1 to kinetochores relieves this inhibition. Required for embryonic development. The sequence is that of Protein zwilch homolog (zwl-1) from Caenorhabditis elegans.